We begin with the raw amino-acid sequence, 141 residues long: Large ribosomal subunit protein uL11 (141 aa).

This sequence belongs to the universal ribosomal protein uL11 family. Part of the ribosomal stalk of the 50S ribosomal subunit. Interacts with L10 and the large rRNA to form the base of the stalk. L10 forms an elongated spine to which L12 dimers bind in a sequential fashion forming a multimeric L10(L12)X complex. Post-translationally, one or more lysine residues are methylated.

Functionally, forms part of the ribosomal stalk which helps the ribosome interact with GTP-bound translation factors. The polypeptide is Large ribosomal subunit protein uL11 (Trichlorobacter lovleyi (strain ATCC BAA-1151 / DSM 17278 / SZ) (Geobacter lovleyi)).